The primary structure comprises 267 residues: Glucosamine-6-phosphate deaminase (267 aa).

The Proton acceptor; for enolization step role is filled by Asp-72. Catalysis depends on Asp-141, which acts as the For ring-opening step. His-143 (proton acceptor; for ring-opening step) is an active-site residue. Glu-148 serves as the catalytic For ring-opening step.

Belongs to the glucosamine/galactosamine-6-phosphate isomerase family. NagB subfamily. In terms of assembly, homohexamer.

It catalyses the reaction alpha-D-glucosamine 6-phosphate + H2O = beta-D-fructose 6-phosphate + NH4(+). Its pathway is amino-sugar metabolism; N-acetylneuraminate degradation; D-fructose 6-phosphate from N-acetylneuraminate: step 5/5. With respect to regulation, allosterically activated by N-acetylglucosamine 6-phosphate (GlcNAc6P). Catalyzes the reversible isomerization-deamination of glucosamine 6-phosphate (GlcN6P) to form fructose 6-phosphate (Fru6P) and ammonium ion. The protein is Glucosamine-6-phosphate deaminase of Mannheimia succiniciproducens (strain KCTC 0769BP / MBEL55E).